The primary structure comprises 254 residues: NAD-dependent glycerol dehydrogenase (254 aa).

18–47 (VVTGAASGIGKAMAELFSEKGAYVVLLDIK) serves as a coordination point for NAD(+). The Proton acceptor role is filled by Tyr160. Position 164 (Lys164) interacts with NAD(+).

The protein belongs to the short-chain dehydrogenases/reductases (SDR) family. Requires Mg(2+) as cofactor. The cofactor is Mn(2+).

The protein resides in the cytoplasm. The catalysed reaction is glycerol + NAD(+) = dihydroxyacetone + NADH + H(+). Inhibited by Zn(2+). In terms of biological role, involved in the glycerol metabolism. Catalyzes the NAD-dependent oxidation of glycerol to dihydroxyacetone (glycerone). GolD specifically uses NAD. The sequence is that of NAD-dependent glycerol dehydrogenase from Listeria innocua serovar 6a (strain ATCC BAA-680 / CLIP 11262).